The primary structure comprises 364 residues: Oxidized polyvinyl alcohol hydrolase (364 aa).

The N-terminal stretch at 1 to 34 (MFKPVVKSRSSRSFCYLAGCLAMVAATLSSTAQA) is a signal peptide. Active-site charge relay system residues include Ser190 and Ser293.

This sequence belongs to the peptidase S9A family. In terms of assembly, monomer.

Its subcellular location is the periplasm. It catalyses the reaction nonane-4,6-dione + H2O = pentan-2-one + butanoate + H(+). Its function is as follows. Catalyzes the hydrolysis of 4,6-nonanedione, a beta-diketone compound. Also mediates hydrolysis of oxidized polyvinyl alcohol (PVA) in the second step in the degradation of polyvinyl alcohol. Not active toward the monoketone structure. In Sphingopyxis sp. (strain 113P3), this protein is Oxidized polyvinyl alcohol hydrolase (oph).